The chain runs to 128 residues: Probable 4-amino-4-deoxy-L-arabinose-phosphoundecaprenol flippase subunit ArnF (128 aa).

The Cytoplasmic segment spans residues 1-10 (MKGYLWGGAS). A helical membrane pass occupies residues 11–31 (VVLVTVAQLVLKWGMMNIPLL). At 32 to 47 (SLADINVQFLTMYFVQ) the chain is on the periplasmic side. The helical transmembrane segment at 48 to 68 (LASVMCGLMGYALSMLCWFFA) threads the bilayer. Topologically, residues 69 to 77 (LRYLPLNRA) are cytoplasmic. The helical transmembrane segment at 78–98 (YPLLSLSYALVYLGAVLLPWF) threads the bilayer. Residues 99 to 101 (NEP) are Periplasmic-facing. Residues 102–122 (ATLLKTLGAGFILLGIWLINI) traverse the membrane as a helical segment. Over 123-128 (KPIKAS) the chain is Cytoplasmic.

This sequence belongs to the ArnF family. Heterodimer of ArnE and ArnF.

It localises to the cell inner membrane. The protein operates within bacterial outer membrane biogenesis; lipopolysaccharide biosynthesis. Translocates 4-amino-4-deoxy-L-arabinose-phosphoundecaprenol (alpha-L-Ara4N-phosphoundecaprenol) from the cytoplasmic to the periplasmic side of the inner membrane. In Yersinia pseudotuberculosis serotype O:1b (strain IP 31758), this protein is Probable 4-amino-4-deoxy-L-arabinose-phosphoundecaprenol flippase subunit ArnF.